Consider the following 330-residue polypeptide: DNA primase small subunit PriS (330 aa).

Residues Asp101 and Asp103 contribute to the active site. Zn(2+) is bound by residues Cys116, Cys119, Cys128, and Asp131. Asp235 is an active-site residue.

The protein belongs to the eukaryotic-type primase small subunit family. In terms of assembly, heterodimer of a small subunit (PriS) and a large subunit (PriL). It depends on Mg(2+) as a cofactor. The cofactor is Mn(2+).

Its function is as follows. Catalytic subunit of DNA primase, an RNA polymerase that catalyzes the synthesis of short RNA molecules used as primers for DNA polymerase during DNA replication. The small subunit contains the primase catalytic core and has DNA synthesis activity on its own. Binding to the large subunit stabilizes and modulates the activity, increasing the rate of DNA synthesis while decreasing the length of the DNA fragments, and conferring RNA synthesis capability. The DNA polymerase activity may enable DNA primase to also catalyze primer extension after primer synthesis. May also play a role in DNA repair. This Saccharolobus islandicus (strain Y.N.15.51 / Yellowstone #2) (Sulfolobus islandicus) protein is DNA primase small subunit PriS.